A 448-amino-acid polypeptide reads, in one-letter code: Signal recognition particle 54 kDa protein (448 aa).

GTP contacts are provided by residues 107–114, 189–193, and 247–250; these read GIQGSGKT, DSAGR, and TKLD.

The protein belongs to the GTP-binding SRP family. SRP54 subfamily. In terms of assembly, part of the signal recognition particle protein translocation system, which is composed of SRP and FtsY. Archaeal SRP consists of a 7S RNA molecule of 300 nucleotides and two protein subunits: SRP54 and SRP19.

It is found in the cytoplasm. The enzyme catalyses GTP + H2O = GDP + phosphate + H(+). Functionally, involved in targeting and insertion of nascent membrane proteins into the cytoplasmic membrane. Binds to the hydrophobic signal sequence of the ribosome-nascent chain (RNC) as it emerges from the ribosomes. The SRP-RNC complex is then targeted to the cytoplasmic membrane where it interacts with the SRP receptor FtsY. This Thermococcus onnurineus (strain NA1) protein is Signal recognition particle 54 kDa protein.